The sequence spans 236 residues: Uridylate kinase (236 aa).

8–11 serves as a coordination point for ATP; it reads KLSG. Position 51 (Gly51) interacts with UMP. ATP contacts are provided by Gly52 and Arg56. UMP is bound by residues Asp71 and 133 to 140; that span reads TGRPFFTT. ATP is bound by residues Asn161, Phe167, and Asp170.

This sequence belongs to the UMP kinase family. Homohexamer.

The protein resides in the cytoplasm. The catalysed reaction is UMP + ATP = UDP + ADP. It participates in pyrimidine metabolism; CTP biosynthesis via de novo pathway; UDP from UMP (UMPK route): step 1/1. Its activity is regulated as follows. Inhibited by UTP. In terms of biological role, catalyzes the reversible phosphorylation of UMP to UDP. The protein is Uridylate kinase of Mesomycoplasma hyopneumoniae (strain 232) (Mycoplasma hyopneumoniae).